The sequence spans 460 residues: 3-ketoacyl-CoA synthase 7 (460 aa).

Residues 21 to 41 (FHQFLVASACVLIAVFGYYFF) form a helical membrane-spanning segment. An FAE domain is found at 38-328 (YYFFKPRCII…YIISFIQRKW (291 aa)). Residues cysteine 183, histidine 262, histidine 345, histidine 349, and asparagine 382 contribute to the active site.

Belongs to the thiolase-like superfamily. Chalcone/stilbene synthases family. As to expression, expressed in flowers.

The protein resides in the membrane. It carries out the reaction a very-long-chain acyl-CoA + malonyl-CoA + H(+) = a very-long-chain 3-oxoacyl-CoA + CO2 + CoA. The protein operates within lipid metabolism; fatty acid biosynthesis. This is 3-ketoacyl-CoA synthase 7 from Arabidopsis thaliana (Mouse-ear cress).